We begin with the raw amino-acid sequence, 202 residues long: Transmembrane gamma-carboxyglutamic acid protein 2 (202 aa).

An N-terminal signal peptide occupies residues 1–23; the sequence is MRGHPSLLLLYMALTTCLDTSPS. Residues 24–49 constitute a propeptide that is removed on maturation; sequence EETDQEVFLGPPEAQSFLSSHTRIPR. One can recognise a Gla domain in the interval 50-96; the sequence is ANHWDLELLTPGNLERECLEERCSWEEAREYFEDNTLTERFWESYIY. The Extracellular segment spans residues 50-109; that stretch reads ANHWDLELLTPGNLERECLEERCSWEEAREYFEDNTLTERFWESYIYNGKGGRGRVDVAS. C67 and C72 are joined by a disulfide. E70 is modified (4-carboxyglutamate). The helical transmembrane segment at 110–130 threads the bilayer; that stretch reads LAVGLTGGILLIVLAGLGAFW. Topologically, residues 131–202 are cytoplasmic; sequence YLRWRQHRGQ…PPYTSLRRPH (72 aa). The interval 143-202 is disordered; it reads CPQEAGLISPLSPLNPLGPPTPLPPPPPPPPGLPTYEQALAASGVHDAPPPPYTSLRRPH. The segment covering 158 to 175 has biased composition (pro residues); it reads PLGPPTPLPPPPPPPPGL. The short motif at 175-178 is the LPXY motif; mediates binding to WW domain-containing proteins element; the sequence is LPTY. The short motif at 192 to 195 is the PPXY motif; mediates binding to WW domain-containing proteins element; that stretch reads PPPY.

As to quaternary structure, interacts with NEDD4. Interacts (via cytoplasmic domain) with transcriptional coactivator YAP1. Gamma-carboxyglutamate residues are formed by vitamin K dependent carboxylation. These residues are essential for the binding of calcium. In terms of tissue distribution, widely expressed with highest levels in kidney. Also highly expressed in the thyroid.

It localises to the cell membrane. The protein is Transmembrane gamma-carboxyglutamic acid protein 2 of Homo sapiens (Human).